Here is a 561-residue protein sequence, read N- to C-terminus: Potassium-transporting ATPase potassium-binding subunit (561 aa).

10 helical membrane-spanning segments follow: residues 4–24, 65–85, 134–154, 177–197, 253–273, 285–305, 380–400, 417–437, 484–504, and 528–548; these read IIMQ…PLGI, AGSV…VLML, GLTV…FAVI, LYIL…QGVV, FTNL…VVMF, AIMT…TISE, GLYG…LLVG, MVCL…AFAV, MVGA…ALYL, and FIGL…LPAL.

The protein belongs to the KdpA family. In terms of assembly, the system is composed of three essential subunits: KdpA, KdpB and KdpC.

Its subcellular location is the cell membrane. Functionally, part of the high-affinity ATP-driven potassium transport (or Kdp) system, which catalyzes the hydrolysis of ATP coupled with the electrogenic transport of potassium into the cytoplasm. This subunit binds the extracellular potassium ions and delivers the ions to the membrane domain of KdpB through an intramembrane tunnel. This is Potassium-transporting ATPase potassium-binding subunit from Listeria welshimeri serovar 6b (strain ATCC 35897 / DSM 20650 / CCUG 15529 / CIP 8149 / NCTC 11857 / SLCC 5334 / V8).